A 350-amino-acid polypeptide reads, in one-letter code: Phosphotriesterase-related protein (350 aa).

The a divalent metal cation site is built by histidine 24, histidine 26, glutamate 170, histidine 202, histidine 231, and aspartate 299.

Belongs to the metallo-dependent hydrolases superfamily. Phosphotriesterase family. The cofactor is a divalent metal cation.

This is Phosphotriesterase-related protein from Nematostella vectensis (Starlet sea anemone).